Here is a 95-residue protein sequence, read N- to C-terminus: Protein TusB (95 aa).

This sequence belongs to the DsrH/TusB family. Heterohexamer, formed by a dimer of trimers. The hexameric TusBCD complex contains 2 copies each of TusB, TusC and TusD. The TusBCD complex interacts with TusE.

It localises to the cytoplasm. In terms of biological role, part of a sulfur-relay system required for 2-thiolation of 5-methylaminomethyl-2-thiouridine (mnm(5)s(2)U) at tRNA wobble positions. This Pectobacterium carotovorum subsp. carotovorum (strain PC1) protein is Protein TusB.